The primary structure comprises 689 residues: MIKRKIWCNLCIDLVAFTSEIFKGAVFQSLDGIVVSANCKLRKIFTLKSKPQDTADKDAVYGVPFSTDEPTDIIPRSCQLMTDVPHVTQLLNMTKLRQTEIKFGGHPLRSAESDQFINRGTSITRNSKNQDVCHIAFGSKVLGPPPLSGRRNNMKISSETVRSVGSKNNRSCQPSTVEKCVNGTEMSALLIPESEEQGNKENIHQIKQTVPIHAANLHIMHPHPPQEPSADKNNNRRRLRLKSTSRERTETPSGSSSGNNRIEDKASTILTTVSQQGAELLNSGTLGPQSPDQSDEWIFPENADHISYLASSRQSLLLGDDSCNPSHLWLEASKESEHDQQAEESQSVPKDIFTFSSRPRSAPHGKTQTMSPEELSFILDLKEDNSVTSRDTQSEDDFYGGDSSEEGNHSIQGSRGPTTGPSELTQLTLESLLGKAAKRTSKEYLRSAYTEAGATESQDSSMEQIDRNNFEMSLLPTTCLSPTGRRCGSCQKTPEPVIKAKDLSAQQVPASLNKTSLKEISGERLSSIPEASEYDWRNYQPSQMSESELQMLASLRWQQNEELEDAGTSHGLSASQVDNCNVSISTSSDDTTTWNSCLPPPVNQGRHYQKEMNPPSPSNPRDWLNMLSPPIVPPSQQPAEQRPDSCESLSVQGEEDLSVEEDEEVLTLLYDPCLNCYFDPQTGKYYELV.

Disordered regions lie at residues 241–263, 333–423, and 584–659; these read LKST…NRIE, SKES…GPSE, and ISTS…DLSV. 2 stretches are compositionally biased toward polar residues: residues 251–260 and 343–359; these read TPSGSSSGNN and EESQ…SSRP. Residues 394 to 405 are compositionally biased toward acidic residues; it reads SEDDFYGGDSSE. Over residues 409–421 the composition is skewed to polar residues; sequence HSIQGSRGPTTGP. Low complexity predominate over residues 584–593; the sequence is ISTSSDDTTT.

The protein is Protein CFAP20DC of Homo sapiens (Human).